The sequence spans 91 residues: Small ribosomal subunit protein uS19 (91 aa).

This sequence belongs to the universal ribosomal protein uS19 family.

Its function is as follows. Protein S19 forms a complex with S13 that binds strongly to the 16S ribosomal RNA. The sequence is that of Small ribosomal subunit protein uS19 from Afipia carboxidovorans (strain ATCC 49405 / DSM 1227 / KCTC 32145 / OM5) (Oligotropha carboxidovorans).